Reading from the N-terminus, the 428-residue chain is Probable RNase MJ4 (428 aa).

Zn(2+) contacts are provided by His57, His59, Asp61, His62, His143, Asp165, and His397.

Belongs to the metallo-beta-lactamase superfamily. RNA-metabolizing metallo-beta-lactamase-like family. It depends on Zn(2+) as a cofactor.

Functionally, probably an RNase. This Methanocaldococcus jannaschii (strain ATCC 43067 / DSM 2661 / JAL-1 / JCM 10045 / NBRC 100440) (Methanococcus jannaschii) protein is Probable RNase MJ4.